Consider the following 214-residue polypeptide: Octanoyltransferase (214 aa).

The 183-residue stretch at G28–A210 folds into the BPL/LPL catalytic domain. Residues R73–H80, S140–G142, and G153–S155 each bind substrate. Residue C171 is the Acyl-thioester intermediate of the active site.

The protein belongs to the LipB family.

Its subcellular location is the cytoplasm. The catalysed reaction is octanoyl-[ACP] + L-lysyl-[protein] = N(6)-octanoyl-L-lysyl-[protein] + holo-[ACP] + H(+). Its pathway is protein modification; protein lipoylation via endogenous pathway; protein N(6)-(lipoyl)lysine from octanoyl-[acyl-carrier-protein]: step 1/2. Functionally, catalyzes the transfer of endogenously produced octanoic acid from octanoyl-acyl-carrier-protein onto the lipoyl domains of lipoate-dependent enzymes. Lipoyl-ACP can also act as a substrate although octanoyl-ACP is likely to be the physiological substrate. This Maridesulfovibrio salexigens (strain ATCC 14822 / DSM 2638 / NCIMB 8403 / VKM B-1763) (Desulfovibrio salexigens) protein is Octanoyltransferase.